The sequence spans 158 residues: NADH-quinone oxidoreductase subunit B (158 aa).

Residues C37, C38, C102, and C132 each coordinate [4Fe-4S] cluster.

Belongs to the complex I 20 kDa subunit family. As to quaternary structure, NDH-1 is composed of 14 different subunits. Subunits NuoB, C, D, E, F, and G constitute the peripheral sector of the complex. [4Fe-4S] cluster is required as a cofactor.

Its subcellular location is the cell inner membrane. The catalysed reaction is a quinone + NADH + 5 H(+)(in) = a quinol + NAD(+) + 4 H(+)(out). Functionally, NDH-1 shuttles electrons from NADH, via FMN and iron-sulfur (Fe-S) centers, to quinones in the respiratory chain. The immediate electron acceptor for the enzyme in this species is believed to be ubiquinone. Couples the redox reaction to proton translocation (for every two electrons transferred, four hydrogen ions are translocated across the cytoplasmic membrane), and thus conserves the redox energy in a proton gradient. In Halorhodospira halophila (strain DSM 244 / SL1) (Ectothiorhodospira halophila (strain DSM 244 / SL1)), this protein is NADH-quinone oxidoreductase subunit B.